A 431-amino-acid polypeptide reads, in one-letter code: Enolase (431 aa).

Glutamine 163 lines the (2R)-2-phosphoglycerate pocket. The active-site Proton donor is the glutamate 205. The Mg(2+) site is built by aspartate 242, glutamate 288, and aspartate 315. (2R)-2-phosphoglycerate contacts are provided by lysine 340, arginine 369, serine 370, and lysine 391. Residue lysine 340 is the Proton acceptor of the active site.

Belongs to the enolase family. Requires Mg(2+) as cofactor.

The protein localises to the cytoplasm. It localises to the secreted. The protein resides in the cell surface. It carries out the reaction (2R)-2-phosphoglycerate = phosphoenolpyruvate + H2O. It functions in the pathway carbohydrate degradation; glycolysis; pyruvate from D-glyceraldehyde 3-phosphate: step 4/5. Functionally, catalyzes the reversible conversion of 2-phosphoglycerate (2-PG) into phosphoenolpyruvate (PEP). It is essential for the degradation of carbohydrates via glycolysis. In Acholeplasma laidlawii (strain PG-8A), this protein is Enolase.